Here is a 243-residue protein sequence, read N- to C-terminus: NifU-like scaffold protein (243 aa).

The protein belongs to the NifU family. In terms of assembly, homodimer.

The protein resides in the plastid. It is found in the apicoplast. Its pathway is cofactor biosynthesis; iron-sulfur cluster biosynthesis. Functionally, binds and transfers [4Fe-4S] iron-sulfur clusters to target proteins. This chain is NifU-like scaffold protein, found in Plasmodium berghei (strain Anka).